The sequence spans 313 residues: uncharacterized protein (313 aa).

This is an uncharacterized protein from Archaeoglobus fulgidus (strain ATCC 49558 / DSM 4304 / JCM 9628 / NBRC 100126 / VC-16).